The chain runs to 238 residues: Sugar fermentation stimulation protein homolog (238 aa).

It belongs to the SfsA family.

In Histophilus somni (strain 2336) (Haemophilus somnus), this protein is Sugar fermentation stimulation protein homolog.